We begin with the raw amino-acid sequence, 460 residues long: Telomere-binding protein homolog (460 aa).

It belongs to the telombin family.

It is found in the nucleus. It localises to the chromosome. Its subcellular location is the telomere. In terms of biological role, may bind telomeric T4G4 sequences. This Euplotes crassus protein is Telomere-binding protein homolog.